Consider the following 312-residue polypeptide: Glycine--tRNA ligase alpha subunit (312 aa).

This sequence belongs to the class-II aminoacyl-tRNA synthetase family. In terms of assembly, tetramer of two alpha and two beta subunits.

It localises to the cytoplasm. The enzyme catalyses tRNA(Gly) + glycine + ATP = glycyl-tRNA(Gly) + AMP + diphosphate. This Nostoc punctiforme (strain ATCC 29133 / PCC 73102) protein is Glycine--tRNA ligase alpha subunit.